The primary structure comprises 206 residues: Pyridoxine/pyridoxamine 5'-phosphate oxidase (206 aa).

Residues 53–58 (RMVLLK), 68–69 (YT), lysine 75, and glutamine 97 contribute to the FMN site. Lysine 58 is a binding site for substrate. Residues tyrosine 115, arginine 119, and serine 123 each contribute to the substrate site. FMN is bound by residues 132–133 (QS) and tryptophan 177. 183-185 (RLH) is a substrate binding site. FMN is bound at residue arginine 187.

The protein belongs to the pyridoxamine 5'-phosphate oxidase family. In terms of assembly, homodimer. FMN is required as a cofactor.

It carries out the reaction pyridoxamine 5'-phosphate + O2 + H2O = pyridoxal 5'-phosphate + H2O2 + NH4(+). The catalysed reaction is pyridoxine 5'-phosphate + O2 = pyridoxal 5'-phosphate + H2O2. Its pathway is cofactor metabolism; pyridoxal 5'-phosphate salvage; pyridoxal 5'-phosphate from pyridoxamine 5'-phosphate: step 1/1. It participates in cofactor metabolism; pyridoxal 5'-phosphate salvage; pyridoxal 5'-phosphate from pyridoxine 5'-phosphate: step 1/1. Its function is as follows. Catalyzes the oxidation of either pyridoxine 5'-phosphate (PNP) or pyridoxamine 5'-phosphate (PMP) into pyridoxal 5'-phosphate (PLP). This is Pyridoxine/pyridoxamine 5'-phosphate oxidase from Rhizobium johnstonii (strain DSM 114642 / LMG 32736 / 3841) (Rhizobium leguminosarum bv. viciae).